The primary structure comprises 288 residues: UTP--glucose-1-phosphate uridylyltransferase (288 aa).

The protein belongs to the UDPGP type 2 family.

It carries out the reaction alpha-D-glucose 1-phosphate + UTP + H(+) = UDP-alpha-D-glucose + diphosphate. It participates in glycolipid metabolism; diglucosyl-diacylglycerol biosynthesis. Its function is as follows. Catalyzes the formation of UDP-glucose from glucose-1-phosphate and UTP. This is an intermediate step in the biosynthesis of diglucosyl-diacylglycerol (Glc2-DAG), i.e. a glycolipid found in the membrane, which is also used as a membrane anchor for lipoteichoic acid (LTA). The polypeptide is UTP--glucose-1-phosphate uridylyltransferase (gtaB) (Staphylococcus epidermidis (strain ATCC 35984 / DSM 28319 / BCRC 17069 / CCUG 31568 / BM 3577 / RP62A)).